We begin with the raw amino-acid sequence, 385 residues long: Aldehyde dehydrogenase family 3 member B2 (385 aa).

107–112 (GSPRVG) contacts NAD(+). Residues Glu129 and Cys163 contribute to the active site. The residue at position 382 (Cys382) is a Cysteine methyl ester. Residue Cys382 is the site of S-geranylgeranyl cysteine attachment. Positions 383–385 (TLL) are cleaved as a propeptide — removed in mature form.

The protein belongs to the aldehyde dehydrogenase family. In terms of processing, geranylgeranylation is important for localization to lipid droplets and enzyme activity. In terms of tissue distribution, salivary gland. Expressed at protein level in placenta.

The protein resides in the lipid droplet. The enzyme catalyses an aldehyde + NAD(+) + H2O = a carboxylate + NADH + 2 H(+). It carries out the reaction a long-chain fatty aldehyde + NAD(+) + H2O = a long-chain fatty acid + NADH + 2 H(+). It catalyses the reaction a medium-chain fatty aldehyde + NAD(+) + H2O = a medium-chain fatty acid + NADH + 2 H(+). The catalysed reaction is hexadecanoate + NADH + 2 H(+) = hexadecanal + NAD(+) + H2O. The enzyme catalyses octanal + NAD(+) + H2O = octanoate + NADH + 2 H(+). It functions in the pathway alcohol metabolism; ethanol degradation; acetate from ethanol: step 2/2. In terms of biological role, oxidizes medium and long chain fatty aldehydes in lipid droplets into non-toxic fatty acids. The chain is Aldehyde dehydrogenase family 3 member B2 (ALDH3B2) from Homo sapiens (Human).